The primary structure comprises 282 residues: MADSNLNVPVIIQATRLDTSVLPRNIFSQSYLLYVIAQGTDVGNVANKANEAGQGAYDAQVRNDEQDVILADHEQRISAAEATLVNHEERIRQAESTLQDHETRIAQNESDISSLDTRVQSLESQVSDHETRIDALEYATTRKKSEVVYSGVSVTIPTAPTNLVSLLKTLTPSSGTLAPFFDTVNNKMVVFNENKTLFFKLSIVGTWPSGTANRSMQLTFSGSVPDTLVSSRNSATTTDNILLATFFSVDKDGFLATNGSTLTIQSNGASFTATTIKIIAEQ.

The tract at residues 2–60 (ADSNLNVPVIIQATRLDTSVLPRNIFSQSYLLYVIAQGTDVGNVANKANEAGQGAYDAQ) is interaction with tail hub protein. 11 Trimerization heptad repeat repeats span residues 61–67 (VRNDEQD), 70–76 (LADHEQR), 77–83 (ISAAEAT), 84–90 (LVNHEER), 91–97 (IRQAEST), 98–104 (LQDHETR), 105–111 (IAQNESD), 112–118 (ISSLDTR), 119–125 (VQSLESQ), 126–132 (VSDHETR), and 133–139 (IDALEYA). Positions 61-139 (VRNDEQDVIL…ETRIDALEYA (79 aa)) form a coiled coil. A C-terminal globular knob region spans residues 132-282 (RIDALEYATT…ATTIKIIAEQ (151 aa)). 6 residues coordinate L-glutamate: Glu-146, Lys-200, Ser-248, Asp-250, Leu-255, and Lys-277.

It belongs to the Lederbergvirus tail needle protein family. As to quaternary structure, homotrimer. The trimer forms an elongated coiled-coil (280A x 25A). he N-terminal tip may exist in a pre-ejection extended conformation, which may fold into a trimer of hairpins only after ejection into the host. Interacts with the tail hub. Interacts with the head-to-tail adapter protein.

It is found in the virion. Functionally, cell-perforating component and plug protein of the phage tail machine. Together with the internal ejection proteins is required for stabilization of the condensed DNA within the capsid by plugging the hole through which the DNA enters. Host cell membrane perforation allows viral DNA ejection. The needle penetrates the host outer membrane. The needle is released and the internal head protein gp7 is ejected to form an extra-cellular channel. In Shigella phage Sf6 (Shigella flexneri bacteriophage VI), this protein is Tail needle protein (9).